The following is a 136-amino-acid chain: MSNVPHKSSLPEGIRPGTVLRIRGLVPPNASRFHVNLLCGEEQGSDAALHFNPRLDTSEVVFNSKEQGSWGREERGPGVPFQRGQPFEVLIIASDDGFKAVVGDAQYHHFRHRLPLARVRLVEVGGDVQLDSVRIF.

In terms of domain architecture, Galectin spans 6 to 136 (HKSSLPEGIR…DVQLDSVRIF (131 aa)). 70–76 (WGREERG) contacts a beta-D-galactoside.

Monomer. In terms of tissue distribution, mainly expressed in stratified squamous epithelium.

It localises to the cytoplasm. It is found in the nucleus. Its subcellular location is the secreted. In terms of biological role, could be involved in cell-cell and/or cell-matrix interactions necessary for normal growth control. Pro-apoptotic protein that functions intracellularly upstream of JNK activation and cytochrome c release. The chain is Galectin-7 (LGALS7) from Homo sapiens (Human).